Reading from the N-terminus, the 218-residue chain is ATP-dependent dethiobiotin synthetase BioD (218 aa).

10–15 is an ATP binding site; sequence NAGKTT. Position 14 (Thr-14) interacts with Mg(2+). The active site involves Lys-35. Thr-39 contributes to the substrate binding site. Position 116 (Glu-116) interacts with Mg(2+). Residues 116 to 119 and 176 to 177 contribute to the ATP site; these read EGAG and LR.

This sequence belongs to the dethiobiotin synthetase family. Homodimer. Requires Mg(2+) as cofactor.

Its subcellular location is the cytoplasm. The enzyme catalyses (7R,8S)-7,8-diammoniononanoate + CO2 + ATP = (4R,5S)-dethiobiotin + ADP + phosphate + 3 H(+). It participates in cofactor biosynthesis; biotin biosynthesis; biotin from 7,8-diaminononanoate: step 1/2. Catalyzes a mechanistically unusual reaction, the ATP-dependent insertion of CO2 between the N7 and N8 nitrogen atoms of 7,8-diaminopelargonic acid (DAPA, also called 7,8-diammoniononanoate) to form a ureido ring. The sequence is that of ATP-dependent dethiobiotin synthetase BioD from Helicobacter pylori (strain J99 / ATCC 700824) (Campylobacter pylori J99).